A 288-amino-acid polypeptide reads, in one-letter code: Bifunctional protein FolD (288 aa).

NADP(+)-binding positions include 166-168 and Ile-232; that span reads GAS.

The protein belongs to the tetrahydrofolate dehydrogenase/cyclohydrolase family. In terms of assembly, homodimer.

It carries out the reaction (6R)-5,10-methylene-5,6,7,8-tetrahydrofolate + NADP(+) = (6R)-5,10-methenyltetrahydrofolate + NADPH. The catalysed reaction is (6R)-5,10-methenyltetrahydrofolate + H2O = (6R)-10-formyltetrahydrofolate + H(+). It functions in the pathway one-carbon metabolism; tetrahydrofolate interconversion. In terms of biological role, catalyzes the oxidation of 5,10-methylenetetrahydrofolate to 5,10-methenyltetrahydrofolate and then the hydrolysis of 5,10-methenyltetrahydrofolate to 10-formyltetrahydrofolate. This chain is Bifunctional protein FolD, found in Escherichia coli (strain SMS-3-5 / SECEC).